A 215-amino-acid chain; its full sequence is Sodium channel regulatory subunit beta-3 (215 aa).

An N-terminal signal peptide occupies residues 1–24 (MPAFNRLLPLASLVLIYWVRVCFP). Residues 25 to 138 (VCVEVPSETE…EAHRPFVKTT (114 aa)) enclose the Ig-like C2-type domain. Residues 25-156 (VCVEVPSETE…EEAGEDFTSV (132 aa)) lie on the Extracellular side of the membrane. 2 cysteine pairs are disulfide-bonded: Cys26–Cys48 and Cys45–Cys120. Asn95, Asn109, Asn113, and Asn121 each carry an N-linked (GlcNAc...) asparagine glycan. A helical membrane pass occupies residues 157 to 178 (VSEIMMYILLVFLTLWLFIEMI). Residues 179–215 (YCYRKVSKAEEAAQENASDYLAIPSENKENSVVPVEE) lie on the Cytoplasmic side of the membrane.

Belongs to the sodium channel auxiliary subunit SCN3B (TC 8.A.17) family. A voltage-gated sodium (Nav) channel consists of an ion-conducting pore-forming alpha subunit functional on its own that is regulated by one or more beta subunits. Forms homodimers and homotrimers. SCN3B is non-covalently associated with alpha subunits and induces the formation of alpha subunit oligomers, including trimers. Interacts with SCN5A/Nav1.5; regulatory subunit of SCN5A/Nav1.5. Interacts with SCN7A/Nav2.1; probable regulatory subunit of SCN7A/Nav2.1. Interacts with SCN10A; regulatory subunit of SCN10A/Nav1.8. Interacts with NFASC; probably involved in targeting the sodium channels to the nodes of Ranvier. In terms of processing, intramolecular disulfide bonds favor the voltage-gated sodium channel oligomeric complex assembly. N-glycosylated. As to expression, expressed broadly in neurons in the central and peripheral nervous systems, but not in glia and most non-neuronal cells. Weak detection in lung and adrenal gland.

It localises to the cell membrane. Its function is as follows. Regulatory subunit of multiple voltage-gated sodium (Nav) channels directly mediating the depolarization of excitable membranes. Navs, also called VGSCs (voltage-gated sodium channels) or VDSCs (voltage-dependent sodium channels), operate by switching between closed and open conformations depending on the voltage difference across the membrane. In the open conformation they allow Na(+) ions to selectively pass through the pore, along their electrochemical gradient. The influx of Na+ ions provokes membrane depolarization, initiating the propagation of electrical signals throughout cells and tissues. The accessory beta subunits participate in localization and functional modulation of the Nav channels. Voltage-gated sodium channels regulatory subunit that modulates channel gating kinetics. Modulates the activity of SCN2A/Nav1.2, causing a hyperpolarizing shift in the voltage-dependence of inactivation and increasing the fraction of channels operating in the fast gating mode. Also able to induce unique persistent SCN2A/Nav1.2-mediated sodium currents. Could modulate the activity of SCN10A/Nav1.8. This chain is Sodium channel regulatory subunit beta-3, found in Rattus norvegicus (Rat).